A 79-amino-acid polypeptide reads, in one-letter code: Protein OPG081 (79 aa).

Topologically, residues 2–8 are intravirion; sequence VDAITVL. The helical transmembrane segment at 9–29 threads the bilayer; sequence TAIGITVLMLLMVISGAALIV. At 30–47 the chain is on the virion surface side; the sequence is KELNPNDIFTMQSLKFNR. A helical transmembrane segment spans residues 48–68; that stretch reads AVTIFKYIGLFIYIPGTIILY. Residues 69–79 are Intravirion-facing; the sequence is ATYVKSLLMKS.

It belongs to the orthopoxvirus OPG081 family.

The protein resides in the virion membrane. Its function is as follows. Envelope protein. The chain is Protein OPG081 (OPG081) from Vaccinia virus (strain Western Reserve) (VACV).